We begin with the raw amino-acid sequence, 162 residues long: Ribosomal RNA large subunit methyltransferase H (162 aa).

S-adenosyl-L-methionine-binding positions include Leu-78, Gly-109, and 128 to 133; that span reads LSALTL.

It belongs to the RNA methyltransferase RlmH family. In terms of assembly, homodimer.

It localises to the cytoplasm. The catalysed reaction is pseudouridine(1915) in 23S rRNA + S-adenosyl-L-methionine = N(3)-methylpseudouridine(1915) in 23S rRNA + S-adenosyl-L-homocysteine + H(+). Functionally, specifically methylates the pseudouridine at position 1915 (m3Psi1915) in 23S rRNA. The chain is Ribosomal RNA large subunit methyltransferase H from Psychrobacter arcticus (strain DSM 17307 / VKM B-2377 / 273-4).